A 123-amino-acid polypeptide reads, in one-letter code: Small ribosomal subunit protein uS12c (123 aa).

Belongs to the universal ribosomal protein uS12 family. In terms of assembly, part of the 30S ribosomal subunit.

Its subcellular location is the plastid. The protein resides in the chloroplast. In terms of biological role, with S4 and S5 plays an important role in translational accuracy. Located at the interface of the 30S and 50S subunits. This chain is Small ribosomal subunit protein uS12c (rps12), found in Oenothera elata subsp. hookeri (Hooker's evening primrose).